We begin with the raw amino-acid sequence, 320 residues long: Glycerol-3-phosphate dehydrogenase [NAD(P)+] (320 aa).

Residues Phe-11, Arg-30, and Lys-102 each coordinate NADPH. Residues Lys-102, Gly-130, and Ser-132 each contribute to the sn-glycerol 3-phosphate site. Ala-134 is a binding site for NADPH. Positions 185, 238, 248, 249, and 250 each coordinate sn-glycerol 3-phosphate. Lys-185 serves as the catalytic Proton acceptor. Arg-249 is an NADPH binding site. NADPH is bound at residue Glu-270.

Belongs to the NAD-dependent glycerol-3-phosphate dehydrogenase family.

The protein localises to the cytoplasm. The enzyme catalyses sn-glycerol 3-phosphate + NAD(+) = dihydroxyacetone phosphate + NADH + H(+). It catalyses the reaction sn-glycerol 3-phosphate + NADP(+) = dihydroxyacetone phosphate + NADPH + H(+). Its pathway is membrane lipid metabolism; glycerophospholipid metabolism. Its function is as follows. Catalyzes the reduction of the glycolytic intermediate dihydroxyacetone phosphate (DHAP) to sn-glycerol 3-phosphate (G3P), the key precursor for phospholipid synthesis. This is Glycerol-3-phosphate dehydrogenase [NAD(P)+] from Roseobacter denitrificans (strain ATCC 33942 / OCh 114) (Erythrobacter sp. (strain OCh 114)).